A 470-amino-acid polypeptide reads, in one-letter code: ATP synthase subunit beta (470 aa).

155–162 is an ATP binding site; that stretch reads GGAGVGKT.

This sequence belongs to the ATPase alpha/beta chains family. As to quaternary structure, F-type ATPases have 2 components, CF(1) - the catalytic core - and CF(0) - the membrane proton channel. CF(1) has five subunits: alpha(3), beta(3), gamma(1), delta(1), epsilon(1). CF(0) has three main subunits: a(1), b(2) and c(9-12). The alpha and beta chains form an alternating ring which encloses part of the gamma chain. CF(1) is attached to CF(0) by a central stalk formed by the gamma and epsilon chains, while a peripheral stalk is formed by the delta and b chains.

It is found in the cell membrane. The enzyme catalyses ATP + H2O + 4 H(+)(in) = ADP + phosphate + 5 H(+)(out). Its function is as follows. Produces ATP from ADP in the presence of a proton gradient across the membrane. The catalytic sites are hosted primarily by the beta subunits. This Staphylococcus saprophyticus subsp. saprophyticus (strain ATCC 15305 / DSM 20229 / NCIMB 8711 / NCTC 7292 / S-41) protein is ATP synthase subunit beta.